A 749-amino-acid chain; its full sequence is Amyloid-beta A4 precursor protein-binding family A member 2 (749 aa).

Disordered regions lie at residues 1 to 94, 130 to 220, and 238 to 344; these read MAHR…PEEE, DTDE…GDLE, and SMTS…NIPE. Ser-11 is modified (phosphoserine). Polar residues predominate over residues 70–80; sequence GDSSSDYVNNT. Acidic residues-rich tracts occupy residues 81-94 and 131-142; these read SEEE…PEEE and TDECQEAVEEWT. An STXBP1-binding region spans residues 185-270; it reads HYCASKEGYQ…SVEACPPIKA (86 aa). Position 208 is a phosphoserine (Ser-208). Residues 238 to 247 are compositionally biased toward polar residues; sequence SMTSITSASE. Basic and acidic residues predominate over residues 305 to 315; it reads RTPEERLKWPH. Positions 368–555 constitute a PID domain; sequence DGIIFAANYL…IINTQEMYND (188 aa). 2 PDZ domains span residues 568–654 and 659–734; these read ELQL…IVSC and TVLI…TMPA.

Part of a multimeric complex containing STXBP1 and syntaxin-1. Binds to the cytoplasmic domain of amyloid-beta protein, and to the nuclear factor NF-kappa-B/p65 via its PDZ domain. Interacts with the N-terminal domain of NECAB3. Brain.

Its function is as follows. Putative function in synaptic vesicle exocytosis by binding to STXBP1, an essential component of the synaptic vesicle exocytotic machinery. May modulate processing of the amyloid-beta precursor protein (APP) and hence formation of APP-beta. This is Amyloid-beta A4 precursor protein-binding family A member 2 (APBA2) from Homo sapiens (Human).